The chain runs to 489 residues: Glutamyl-tRNA(Gln) amidotransferase subunit A (489 aa).

Residues lysine 80 and serine 160 each act as charge relay system in the active site. Catalysis depends on serine 184, which acts as the Acyl-ester intermediate.

This sequence belongs to the amidase family. GatA subfamily. As to quaternary structure, heterotrimer of A, B and C subunits.

It carries out the reaction L-glutamyl-tRNA(Gln) + L-glutamine + ATP + H2O = L-glutaminyl-tRNA(Gln) + L-glutamate + ADP + phosphate + H(+). Its function is as follows. Allows the formation of correctly charged Gln-tRNA(Gln) through the transamidation of misacylated Glu-tRNA(Gln) in organisms which lack glutaminyl-tRNA synthetase. The reaction takes place in the presence of glutamine and ATP through an activated gamma-phospho-Glu-tRNA(Gln). In Wolbachia sp. subsp. Drosophila simulans (strain wRi), this protein is Glutamyl-tRNA(Gln) amidotransferase subunit A.